The following is a 514-amino-acid chain: 2,3-bisphosphoglycerate-independent phosphoglycerate mutase (514 aa).

Mn(2+)-binding residues include Asp-14 and Ser-64. The active-site Phosphoserine intermediate is Ser-64. Residues His-125, 155–156, Arg-187, Arg-193, 263–266, and Lys-337 contribute to the substrate site; these read RD and RADR. Mn(2+) contacts are provided by Asp-404, His-408, Asp-445, His-446, and His-463.

This sequence belongs to the BPG-independent phosphoglycerate mutase family. In terms of assembly, monomer. Mn(2+) serves as cofactor.

It carries out the reaction (2R)-2-phosphoglycerate = (2R)-3-phosphoglycerate. It participates in carbohydrate degradation; glycolysis; pyruvate from D-glyceraldehyde 3-phosphate: step 3/5. Catalyzes the interconversion of 2-phosphoglycerate and 3-phosphoglycerate. This is 2,3-bisphosphoglycerate-independent phosphoglycerate mutase from Hahella chejuensis (strain KCTC 2396).